A 389-amino-acid polypeptide reads, in one-letter code: MSFDLAARLAERQAADLFRQRPLLQTPQGPQVRADDQELLAFCSNDYLGLANHPEVIRALQLGAEKWGVGGGASHLVIGHSTPHHELEEALAEFTGRPRALLFSTGYMANLAVVTALLGQGDSVLQDRLNHASLLDAGLLCGARFSRYLHNDAVSLANRLRKASGNCLVVTDGVFSMDGDLADLPVLCAEARARDAWVMVDDAHGFGPLGATGGGIVEHFGLGLDEVQVLVGTLGKAFGTAGAFVAGSEELIETLIQFARPYIYTTSQPPAVACATLKSLELLRREGWRREHLQRLIARFRQGAAEIGLSLMDSPTPIQPILVGDSARALKLSALLKDRGLLVGAIRPPTVPAGSARLRVTLSAAHSEAQLELLLEALAECWPQVQADA.

A substrate-binding site is contributed by Arg19. 106–107 (GY) is a binding site for pyridoxal 5'-phosphate. His131 serves as a coordination point for substrate. 3 residues coordinate pyridoxal 5'-phosphate: Ser176, His204, and Thr233. The residue at position 236 (Lys236) is an N6-(pyridoxal phosphate)lysine. Thr350 lines the substrate pocket.

The protein belongs to the class-II pyridoxal-phosphate-dependent aminotransferase family. BioF subfamily. Homodimer. Pyridoxal 5'-phosphate is required as a cofactor.

It catalyses the reaction 6-carboxyhexanoyl-[ACP] + L-alanine + H(+) = (8S)-8-amino-7-oxononanoate + holo-[ACP] + CO2. The protein operates within cofactor biosynthesis; biotin biosynthesis. Functionally, catalyzes the decarboxylative condensation of pimeloyl-[acyl-carrier protein] and L-alanine to produce 8-amino-7-oxononanoate (AON), [acyl-carrier protein], and carbon dioxide. This chain is 8-amino-7-oxononanoate synthase, found in Ectopseudomonas mendocina (strain ymp) (Pseudomonas mendocina).